The primary structure comprises 115 residues: Cysteine-rich venom protein 5 (115 aa).

A signal peptide spans 1-22 (MSKVMIIMLVGMIFAIISTVSG). 3 disulfide bridges follow: cysteine 26-cysteine 41, cysteine 33-cysteine 44, and cysteine 40-cysteine 51. The interval 54–115 (RIGPPINTQP…RKPTNRPRSH (62 aa)) is disordered. Basic residues-rich tracts occupy residues 68-77 (QPTRRTRGPK) and 86-115 (NRTR…PRSH).

As to expression, expressed by the venom gland.

It is found in the secreted. The polypeptide is Cysteine-rich venom protein 5 (Pimpla hypochondriaca (Parasitoid wasp)).